The sequence spans 870 residues: DNA mismatch repair protein MutS (870 aa).

ATP is bound at residue 621–628; it reads GPNMAGKS. The tract at residues 813–834 is disordered; sequence GAPRIAKSRRQRTPDPSPQFSL.

The protein belongs to the DNA mismatch repair MutS family.

Functionally, this protein is involved in the repair of mismatches in DNA. It is possible that it carries out the mismatch recognition step. This protein has a weak ATPase activity. The protein is DNA mismatch repair protein MutS of Pelobacter propionicus (strain DSM 2379 / NBRC 103807 / OttBd1).